Consider the following 320-residue polypeptide: Glutaconate CoA-transferase subunit A (320 aa).

This sequence belongs to the 3-oxoacid CoA-transferase subunit A family. In terms of assembly, heterooctamer of four A and four B subunits.

The protein resides in the cytoplasm. The catalysed reaction is trans-glutaconate + acetyl-CoA = (2E)-glutaconyl-CoA + acetate. Its pathway is amino-acid degradation; L-glutamate degradation via hydroxyglutarate pathway; crotonoyl-CoA from L-glutamate: step 3/5. Its function is as follows. Catalyzes the transfer of the CoA moiety from acetyl-CoA to (R)-2-hydroxyglutarate and related compounds like glutaconate. In Acidaminococcus fermentans (strain ATCC 25085 / DSM 20731 / CCUG 9996 / CIP 106432 / VR4), this protein is Glutaconate CoA-transferase subunit A (gctA).